We begin with the raw amino-acid sequence, 83 residues long: UPF0248 protein TGAM_1209 (83 aa).

This sequence belongs to the UPF0248 family.

The sequence is that of UPF0248 protein TGAM_1209 from Thermococcus gammatolerans (strain DSM 15229 / JCM 11827 / EJ3).